The sequence spans 242 residues: Glucosamine-6-phosphate deaminase (242 aa).

The active-site Proton acceptor; for enolization step is aspartate 67. Asparagine 137 acts as the For ring-opening step in catalysis. Histidine 139 serves as the catalytic Proton acceptor; for ring-opening step. Glutamate 144 serves as the catalytic For ring-opening step.

The protein belongs to the glucosamine/galactosamine-6-phosphate isomerase family. NagB subfamily.

The enzyme catalyses alpha-D-glucosamine 6-phosphate + H2O = beta-D-fructose 6-phosphate + NH4(+). The protein operates within amino-sugar metabolism; N-acetylneuraminate degradation; D-fructose 6-phosphate from N-acetylneuraminate: step 5/5. Functionally, catalyzes the reversible isomerization-deamination of glucosamine 6-phosphate (GlcN6P) to form fructose 6-phosphate (Fru6P) and ammonium ion. This is Glucosamine-6-phosphate deaminase from Staphylococcus saprophyticus subsp. saprophyticus (strain ATCC 15305 / DSM 20229 / NCIMB 8711 / NCTC 7292 / S-41).